Here is a 789-residue protein sequence, read N- to C-terminus: LPS-assembly protein LptD (789 aa).

The signal sequence occupies residues 1 to 39 (MPPRQLSQTTPSCAVVPRKRRLVAALIAVPGLMPALAHA).

This sequence belongs to the LptD family. As to quaternary structure, component of the lipopolysaccharide transport and assembly complex. Interacts with LptE and LptA.

Its subcellular location is the cell outer membrane. Together with LptE, is involved in the assembly of lipopolysaccharide (LPS) at the surface of the outer membrane. The sequence is that of LPS-assembly protein LptD from Paraburkholderia xenovorans (strain LB400).